A 395-amino-acid polypeptide reads, in one-letter code: Renin (395 aa).

Positions 1–21 (MLQSWEFVLLISCFLCFSSDA) are cleaved as a signal peptide. Positions 22-43 (LQRISLKKMPSIRETLQEMGMK) are cleaved as a propeptide — activation peptide. Asparagine 64 is a glycosylation site (N-linked (GlcNAc...) asparagine). The Peptidase A1 domain occupies 79 to 392 (YYGEISIGTP…DRQNNRIGFA (314 aa)). Aspartate 97 is an active-site residue. Disulfide bonds link cysteine 110-cysteine 117 and cysteine 274-cysteine 278. Residue aspartate 283 is part of the active site. Cysteines 316 and 351 form a disulfide.

Belongs to the peptidase A1 family. N-glycosylated. In terms of tissue distribution, expressed by the venom gland (at protein level).

It is found in the secreted. It catalyses the reaction Cleavage of Leu-|-Xaa bond in angiotensinogen to generate angiotensin I.. With respect to regulation, inhibited completely by aspartyl protease inhibitor pepstatin A, but not by the serine- or metalloproteinase inhibitors PMSF or EDTA. Functionally, renin is a highly specific endopeptidase, whose only known function is to generate angiotensin I from angiotensinogen in the plasma, initiating a cascade of reactions that produce an elevation of blood pressure and increased sodium retention by the kidney. This protein is also found in snake venom and shown to specifically cleave human and porcine angiotensinogen into angiotensin I. It does not have general protease activity, no cleavage of alpha or beta casein. May be directly responsible for elevation of blood pressure in the victims of envenomation. The protein is Renin of Echis ocellatus (Ocellated saw-scaled viper).